Reading from the N-terminus, the 157-residue chain is Probable succinate transporter subunit YjjB (157 aa).

4 helical membrane-spanning segments follow: residues 2–22 (GIIS…IPAV), 55–75 (AGFN…SIGI), 87–107 (IFTV…TAMI), and 129–149 (FLKA…PGLW).

Belongs to the ThrE exporter (TC 2.A.79) family. The transporter is composed of YjjB and YjjP.

It is found in the cell inner membrane. Involved in succinate export with YjjP. Both proteins are required for export. The sequence is that of Probable succinate transporter subunit YjjB from Klebsiella pneumoniae subsp. pneumoniae (strain ATCC 700721 / MGH 78578).